We begin with the raw amino-acid sequence, 248 residues long: Probable transcriptional regulatory protein SO_2432 (248 aa).

The protein belongs to the TACO1 family.

The protein resides in the cytoplasm. The chain is Probable transcriptional regulatory protein SO_2432 from Shewanella oneidensis (strain ATCC 700550 / JCM 31522 / CIP 106686 / LMG 19005 / NCIMB 14063 / MR-1).